Reading from the N-terminus, the 144-residue chain is Group IID secretory phospholipase A2 (144 aa).

Residues 1–19 (MRLALLCGLLLAGITATQG) form the signal peptide. 7 disulfides stabilise this stretch: C45-C137, C47-C63, C62-C117, C68-C144, C69-C110, C78-C103, and C96-C108. 3 residues coordinate Ca(2+): H46, G48, and G50. The active site involves H66. D67 contacts Ca(2+). Residue N99 is glycosylated (N-linked (GlcNAc...) asparagine). D111 is an active-site residue.

It belongs to the phospholipase A2 family. The cofactor is Ca(2+). In terms of tissue distribution, highly expressed in secondary lymphoid tissues, spleen and lymph nodes. Expressed at a lesser extent in thymus. Expressed in CD4-positive, IL2RA/CD25-positive, FOXP3-positive Tregs (at protein level). Expressed in myeloid cell subsets resident in spleen and lymph nodes, ITGAX/CD11C-positive dendritic cells and macrophages (at protein level). Enriched in CD4-positive, ITGAM/CD11B-positive dendritic cell subset. Expressed in pulmonary ITGAX/CD11C-positive dendritic cell subset (at protein level).

The protein localises to the secreted. It is found in the cell membrane. It localises to the cytoplasm. It carries out the reaction a 1,2-diacyl-sn-glycero-3-phosphoethanolamine + H2O = a 1-acyl-sn-glycero-3-phosphoethanolamine + a fatty acid + H(+). The enzyme catalyses 1-hexadecanoyl-2-(9Z-octadecenoyl)-sn-glycero-3-phosphoethanolamine + H2O = 1-hexadecanoyl-sn-glycero-3-phosphoethanolamine + (9Z)-octadecenoate + H(+). It catalyses the reaction 1-hexadecanoyl-2-(9Z,12Z-octadecadienoyl)-sn-glycero-3-phosphoethanolamine + H2O = 1-hexadecanoyl-sn-glycero-3-phosphoethanolamine + (9Z,12Z)-octadecadienoate + H(+). The catalysed reaction is 1,2-dihexadecanoyl-sn-glycero-3-phospho-(1'-sn-glycerol) + H2O = 1-hexadecanoyl-sn-glycero-3-phospho-(1'-sn-glycerol) + hexadecanoate + H(+). It carries out the reaction 1-hexadecanoyl-2-(9Z-octadecenoyl)-sn-glycero-3-phospho-(1'-sn-glycerol) + H2O = 1-hexadecanoyl-sn-glycero-3-phospho-(1'-sn-glycerol) + (9Z)-octadecenoate + H(+). The enzyme catalyses a 1,2-diacyl-sn-glycero-3-phosphocholine + H2O = a 1-acyl-sn-glycero-3-phosphocholine + a fatty acid + H(+). It catalyses the reaction 1,2-dihexadecanoyl-sn-glycero-3-phosphocholine + H2O = 1-hexadecanoyl-sn-glycero-3-phosphocholine + hexadecanoate + H(+). The catalysed reaction is 1-hexadecanoyl-2-(9Z-octadecenoyl)-sn-glycero-3-phosphocholine + H2O = 1-hexadecanoyl-sn-glycero-3-phosphocholine + (9Z)-octadecenoate + H(+). It carries out the reaction 1-hexadecanoyl-2-(9Z,12Z-octadecadienoyl)-sn-glycero-3-phosphocholine + H2O = (9Z,12Z)-octadecadienoate + 1-hexadecanoyl-sn-glycero-3-phosphocholine + H(+). The enzyme catalyses 1-hexadecanoyl-2-(4Z,7Z,10Z,13Z,16Z,19Z-docosahexaenoyl)-sn-glycero-3-phosphocholine + H2O = (4Z,7Z,10Z,13Z,16Z,19Z)-docosahexaenoate + 1-hexadecanoyl-sn-glycero-3-phosphocholine + H(+). Functionally, secretory calcium-dependent phospholipase A2 that primarily targets extracellular lipids, exerting anti-inflammatory and immunosuppressive functions. Hydrolyzes the ester bond of the fatty acyl group attached at sn-2 position of phospholipids (phospholipase A2 activity) with preference for phosphatidylethanolamines and phosphatidylglycerols over phosphatidylcholines. In draining lymph nodes, selectively hydrolyzes diacyl and alkenyl forms of phosphatidylethanolamines, releasing omega-3 polyunsaturated fatty acids (PUFAs) such as eicosapentaenoate and docosahexaenoate that are precursors of the anti-inflammatory lipid mediators, resolvins. During the resolution phase of acute inflammation drives docosahexaenoate-derived resolvin D1 synthesis, which suppresses dendritic cell activation and T-helper 1 immune response. May act in an autocrine and paracrine manner. Via a mechanism independent of its catalytic activity, promotes differentiation of regulatory T cells (Tregs) and participates in the maintenance of immune tolerance. May contribute to lipid remodeling of cellular membranes and generation of lipid mediators involved in pathogen clearance. Displays bactericidal activity against Gram-positive bacteria by directly hydrolyzing phospholipids of the bacterial membrane. This is Group IID secretory phospholipase A2 (Pla2g2d) from Mus musculus (Mouse).